The following is a 211-amino-acid chain: RNA chaperone ProQ (211 aa).

The interval 112–148 is disordered; sequence ERRAVEKANNPKANKKRSVHHSGNKSENKKSAGKKFS. The segment covering 124–134 has biased composition (basic residues); it reads ANKKRSVHHSG.

Belongs to the ProQ family.

The protein localises to the cytoplasm. RNA chaperone with significant RNA binding, RNA strand exchange and RNA duplexing activities. The sequence is that of RNA chaperone ProQ from Histophilus somni (strain 2336) (Haemophilus somnus).